Reading from the N-terminus, the 95-residue chain is Aspartyl/glutamyl-tRNA(Asn/Gln) amidotransferase subunit C (95 aa).

Residues 51–95 (PTSHATLTSSRLREDVTRPSLPPEKSLANAPAKSDTSFAVPKIIE) are disordered.

The protein belongs to the GatC family. In terms of assembly, heterotrimer of A, B and C subunits.

It carries out the reaction L-glutamyl-tRNA(Gln) + L-glutamine + ATP + H2O = L-glutaminyl-tRNA(Gln) + L-glutamate + ADP + phosphate + H(+). The catalysed reaction is L-aspartyl-tRNA(Asn) + L-glutamine + ATP + H2O = L-asparaginyl-tRNA(Asn) + L-glutamate + ADP + phosphate + 2 H(+). Allows the formation of correctly charged Asn-tRNA(Asn) or Gln-tRNA(Gln) through the transamidation of misacylated Asp-tRNA(Asn) or Glu-tRNA(Gln) in organisms which lack either or both of asparaginyl-tRNA or glutaminyl-tRNA synthetases. The reaction takes place in the presence of glutamine and ATP through an activated phospho-Asp-tRNA(Asn) or phospho-Glu-tRNA(Gln). This is Aspartyl/glutamyl-tRNA(Asn/Gln) amidotransferase subunit C from Myxococcus xanthus (strain DK1622).